The sequence spans 461 residues: F-box protein At3g62230 (461 aa).

The F-box domain occupies valine 7–aspartate 55.

As to quaternary structure, part of a SCF (ASK-cullin-F-box) protein ligase complex. Interacts with ASK4.

It localises to the nucleus. It functions in the pathway protein modification; protein ubiquitination. In terms of biological role, component of SCF(ASK-cullin-F-box) E3 ubiquitin ligase complexes, which may mediate the ubiquitination and subsequent proteasomal degradation of target proteins. The protein is F-box protein At3g62230 of Arabidopsis thaliana (Mouse-ear cress).